The sequence spans 65 residues: Prokaryotic ubiquitin-like protein Pup (65 aa).

A compositionally biased stretch (basic and acidic residues) spans 1–14 (MSGHEQQRPSRREE). Residues 1–35 (MSGHEQQRPSRREEDVEETPVVPAQAGAQAKESDA) are disordered. The ARC ATPase binding stretch occupies residues 21–59 (VVPAQAGAQAKESDADVDALLDEIDEVLESNSEEFVRGF). A coiled-coil region spans residues 26–49 (AGAQAKESDADVDALLDEIDEVLE). Gln65 carries the post-translational modification Deamidated glutamine. An Isoglutamyl lysine isopeptide (Gln-Lys) (interchain with K-? in acceptor proteins) cross-link involves residue Gln65.

This sequence belongs to the prokaryotic ubiquitin-like protein family. As to quaternary structure, strongly interacts with the proteasome-associated ATPase ARC through a hydrophobic interface; the interacting region of Pup lies in its C-terminal half. There is one Pup binding site per ARC hexamer ring. Is modified by deamidation of its C-terminal glutamine to glutamate by the deamidase Dop, a prerequisite to the subsequent pupylation process.

Its pathway is protein degradation; proteasomal Pup-dependent pathway. In terms of biological role, protein modifier that is covalently attached to lysine residues of substrate proteins, thereby targeting them for proteasomal degradation. The tagging system is termed pupylation. This Kineococcus radiotolerans (strain ATCC BAA-149 / DSM 14245 / SRS30216) protein is Prokaryotic ubiquitin-like protein Pup.